The primary structure comprises 213 residues: Octanoyltransferase (213 aa).

One can recognise a BPL/LPL catalytic domain in the interval E32–P207. Residues R71–H78, S138–G140, and G151–A153 each bind substrate. Catalysis depends on C169, which acts as the Acyl-thioester intermediate.

The protein belongs to the LipB family.

The protein resides in the cytoplasm. It catalyses the reaction octanoyl-[ACP] + L-lysyl-[protein] = N(6)-octanoyl-L-lysyl-[protein] + holo-[ACP] + H(+). The protein operates within protein modification; protein lipoylation via endogenous pathway; protein N(6)-(lipoyl)lysine from octanoyl-[acyl-carrier-protein]: step 1/2. Catalyzes the transfer of endogenously produced octanoic acid from octanoyl-acyl-carrier-protein onto the lipoyl domains of lipoate-dependent enzymes. Lipoyl-ACP can also act as a substrate although octanoyl-ACP is likely to be the physiological substrate. The protein is Octanoyltransferase of Citrobacter koseri (strain ATCC BAA-895 / CDC 4225-83 / SGSC4696).